The following is a 1431-amino-acid chain: MDRRNDYGYRVPLFQGPLPPPGSLGLPFPPDIQTETTEEDSVLLMHTLLAATKDSLAMDPPVVNRPKKSKTKKAPIKTITKAAPAAPPVPAANEIATNKPKITWQALNLPVITQISQALPTTEVTNTQASSVTAQPKKANKMKRVTAKAAQGSQSPTGHEGGTIQLKSPLQVLKLPVISQNIHAPIANESASSQALITSIKPKKASKAKKAANKAIASATEVSLAATATHTATTQGQITNETASIHTTAASIRTKKASKARKTIAKVINTDTEHIEALNVTDAATRQIEASVVAIRPKKSKGKKAASRGPNSVSEISEAPLATQIVTNQALAATLRVKRGSRARKAATKARATESQTPNADQGAQAKIASAQTNVSALETQVAAAVQALADDYLAQLSLEPTTRTRGKRNRKSKHLNGDERSGSNYRRIPWGRRPAPPRDVAILQERANKLVKYLLVKDQTKIPIKRSDMLRDVIQEYDEYFPEIIERASYTLEKMFRVNLKEIDKQSSLYILISTQESSAGILGTTKDTPKLGLLMVILSVIFMNGNKASEAVIWEVLRKLGLRPGVRHSLFGEVRKLITDEFVKQKYLEYKRVPNSRPPEYEFFWGLRSYHETSKMKVLKFACRVQKKDPKDWAVQYREAVEMEVQAAAVAVAEAEARAEARAQMGIGEEAVAGPWNWDDMDIDCLTREELGDDAQAWSRFSFEIEARAQENADASTNVNFSRGASTRAGFSDGASISFNGAPSSSGGFSGGPGITFGVAPSTSASFSNTASISFGGTLSTSSSFSSAASISFGCAHSTSTSFSSEASISFGGMPCTSASFSGGVSSSFSGPLSTSATFSGGASSGFGGTLSTTAGFSGVLSTSTSFGSAPTTSTVFSSALSTSTGFGGILSTSVCFGGSPSSSGSFGGTLSTSICFGGSPCTSTGFGGTLSTSVSFGGSSSTSANFGGTLSTSICFDGSPSTGAGFGGALNTSASFGSVLNTSTGFGGAMSTSADFGGTLSTSVCFGGSPGTSVSFGSALNTNAGYGGAVSTNTDFGGTLSTSVCFGGSPSTSAGFGGALNTNASFGCAVSTSASFSGAVSTSACFSGAPITNPGFGGAFSTSAGFGGALSTAADFGGTPSNSIGFGAAPSTSVSFGGAHGTSLCFGGAPSTSLCFGSASNTNLCFGGPPSTSACFSGATSPSFCDGPSTSTGFSFGNGLSTNAGFGGGLNTSAGFGGGLGTSAGFSGGLSTSSGFDGGLGTSAGFGGGPGTSTGFGGGLGTSAGFSGGLGTSAGFGGGLVTSDGFGGGLGTNASFGSTLGTSAGFSGGLSTSDGFGSRPNASFDRGLSTIIGFGSGSNTSTGFTGEPSTSTGFSSGPSSIVGFSGGPSTGVGFCSGPSTSGFSGGPSTGAGFGGGPNTGAGFGGGPSTSAGFGSGAASLGACGFSYG.

Disordered stretches follow at residues 1–24 (MDRR…PGSL), 341–365 (SRAR…QGAQ), and 401–433 (PTTR…PWGR). Over residues 405–415 (TRGKRNRKSKH) the composition is skewed to basic residues. The 199-residue stretch at 444–642 (LQERANKLVK…KDWAVQYREA (199 aa)) folds into the MAGE domain. 2 tandem repeats follow at residues 751-760 (FSGGPGITFG) and 769-778 (FSNTASISFG). The interval 751–1430 (FSGGPGITFG…ASLGACGFSY (680 aa)) is 62 X 10 AA approximate tandem repeats. One copy of the 3; approximate repeat lies at 779–786 (GTLSTSSS). 2 consecutive repeat copies span residues 787-796 (FSSAASISFG) and 805-814 (FSSEASISFG). A 6; approximate repeat occupies 823 to 833 (FSGGVSSSFSG). The stretch at 841 to 850 (FSGGASSGFG) is repeat 7. An 8; approximate repeat occupies 859-870 (FSGVLSTSTSFG). The stretch at 879–890 (FSSALSTSTGFG) is one 9; approximate repeat. 5 consecutive repeat copies span residues 901 to 910 (GSPSSSGSFG), 911 to 920 (GTLSTSICFG), 921 to 930 (GSPCTSTGFG), 931 to 940 (GTLSTSVSFG), and 941 to 950 (GSSSTSANFG). One copy of the 15; approximate repeat lies at 951-960 (GTLSTSICFD). Tandem repeats lie at residues 961-970 (GSPSTGAGFG), 971-980 (GALNTSASFG), 981-990 (SVLNTSTGFG), 991-1000 (GAMSTSADFG), 1001-1010 (GTLSTSVCFG), and 1011-1020 (GSPGTSVSFG). Residues 1021-1030 (SALNTNAGYG) form a 22; approximate repeat. 4 consecutive repeat copies span residues 1031 to 1040 (GAVSTNTDFG), 1041 to 1050 (GTLSTSVCFG), 1051 to 1060 (GSPSTSAGFG), and 1061 to 1070 (GALNTNASFG). The 27; approximate repeat unit spans residues 1071 to 1080 (CAVSTSASFS). Residues 1081-1090 (GAVSTSACFS) form a 28; approximate repeat. A run of 8 repeats spans residues 1091–1100 (GAPITNPGFG), 1101–1110 (GAFSTSAGFG), 1111–1120 (GALSTAADFG), 1121–1130 (GTPSNSIGFG), 1131–1140 (AAPSTSVSFG), 1141–1150 (GAHGTSLCFG), 1151–1160 (GAPSTSLCFG), and 1161–1170 (SASNTNLCFG). The 37; approximate repeat unit spans residues 1171-1180 (GPPSTSACFS). Residues 1181–1190 (GATSPSFCDG) form a 38; approximate repeat. A run of 3 repeats spans residues 1191 to 1200 (PSTSTGFSFG), 1201 to 1210 (NGLSTNAGFG), and 1211 to 1220 (GGLNTSAGFG). The stretch at 1221–1230 (GGLGTSAGFS) is one 42; approximate repeat. The stretch at 1231-1240 (GGLSTSSGFD) is one 43; approximate repeat. 2 consecutive repeat copies span residues 1241-1250 (GGLGTSAGFG) and 1251-1260 (GGPGTSTGFG). The 46; approximate repeat unit spans residues 1261–1270 (GGLGTSAGFS). Tandem repeats lie at residues 1271–1280 (GGLGTSAGFG), 1281–1290 (GGLVTSDGFG), and 1291–1300 (GGLGTNASFG). Residues 1301–1310 (STLGTSAGFS) form a 50; approximate repeat. Copy 51 of the repeat occupies 1311–1320 (GGLSTSDGFG). A 52; approximate repeat occupies 1321-1330 (SRPNASFDRG). Residues 1331-1340 (LSTIIGFGSG) form a 53; approximate repeat. Residues 1341 to 1350 (SNTSTGFTGE) form a 54; approximate repeat. Positions 1342–1363 (NTSTGFTGEPSTSTGFSSGPSS) are enriched in low complexity. The disordered stretch occupies residues 1342 to 1365 (NTSTGFTGEPSTSTGFSSGPSSIV). A 55; approximate repeat occupies 1351-1360 (PSTSTGFSSG). A 56; approximate repeat occupies 1361 to 1370 (PSSIVGFSGG). One copy of the 57; approximate repeat lies at 1371 to 1380 (PSTGVGFCSG). Residues 1381-1390 (PSTSGFSGGP) form a 58; approximate repeat. One copy of the 59; approximate repeat lies at 1391–1400 (STGAGFGGGP). The 60; approximate repeat unit spans residues 1401-1410 (NTGAGFGGGP). One copy of the 61; approximate repeat lies at 1411-1420 (STSAGFGSGA). Residues 1421 to 1430 (ASLGACGFSY) form a 62; approximate repeat.

In terms of assembly, directly binds bystin, and indirectly tastin. Strong expression at implantation sites. Found in the placenta from the sixth week of pregnancy. Was localized in the cytoplasm of the syncytiotrophoblast in the chorionic villi and in endometrial decidual cells at the uteroplacental interface. After week 10, the level decreased and then disappeared from placental villi. Also found in macrophages.

Its function is as follows. Could be involved with bystin and tastin in a cell adhesion molecule complex that mediates an initial attachment of the blastocyst to uterine epithelial cells at the time of the embryo implantation. Directly responsible for homophilic cell adhesion. This is Trophinin (TRO) from Homo sapiens (Human).